The following is a 224-amino-acid chain: 7-cyano-7-deazaguanine synthase (224 aa).

10 to 20 (LSGGLDSATVV) serves as a coordination point for ATP. Zn(2+) contacts are provided by Cys189, Cys199, Cys202, and Cys205.

It belongs to the QueC family. Zn(2+) serves as cofactor.

The enzyme catalyses 7-carboxy-7-deazaguanine + NH4(+) + ATP = 7-cyano-7-deazaguanine + ADP + phosphate + H2O + H(+). It functions in the pathway purine metabolism; 7-cyano-7-deazaguanine biosynthesis. Its function is as follows. Catalyzes the ATP-dependent conversion of 7-carboxy-7-deazaguanine (CDG) to 7-cyano-7-deazaguanine (preQ(0)). The protein is 7-cyano-7-deazaguanine synthase of Pseudomonas aeruginosa (strain LESB58).